A 279-amino-acid polypeptide reads, in one-letter code: Serine protease 29 (279 aa).

Residues 1 to 17 (MLIQLCLTLFFLGCSIA) form the signal peptide. One can recognise a Peptidase S1 domain in the interval 31-276 (IVGGHSAPQG…FLPWITQQMQ (246 aa)). A disulfide bond links Cys62 and Cys78. Residues His77 and Asp124 each act as charge relay system in the active site. 3 cysteine pairs are disulfide-bonded: Cys158–Cys234, Cys191–Cys215, and Cys224–Cys252. Asn197 carries N-linked (GlcNAc...) asparagine glycosylation. The active-site Charge relay system is the Ser228. Residue Asn235 is glycosylated (N-linked (GlcNAc...) asparagine).

This sequence belongs to the peptidase S1 family. In terms of assembly, homooligomer, heterodimer and heterotetramer. Able to form homo- and hetero- tetrameric structures. Heterotetramer is far more stable than the homotetramer. In terms of tissue distribution, expressed in embryos and placenta. Found in uterus especially in glandular epithelium during zona lysis and implantation.

Its subcellular location is the secreted. Involved in embryo hatching and implantation. The polypeptide is Serine protease 29 (Prss29) (Mus musculus (Mouse)).